A 648-amino-acid polypeptide reads, in one-letter code: Phosphomethylpyrimidine synthase (648 aa).

Substrate-binding positions include Asn-236, Met-265, Tyr-294, His-330, 350-352, 391-394, and Glu-430; these read SRG and DGLR. His-434 serves as a coordination point for Zn(2+). Tyr-457 contacts substrate. Residue His-498 coordinates Zn(2+). [4Fe-4S] cluster-binding residues include Cys-578, Cys-581, and Cys-586.

This sequence belongs to the ThiC family. As to quaternary structure, homodimer. Requires [4Fe-4S] cluster as cofactor.

The catalysed reaction is 5-amino-1-(5-phospho-beta-D-ribosyl)imidazole + S-adenosyl-L-methionine = 4-amino-2-methyl-5-(phosphooxymethyl)pyrimidine + CO + 5'-deoxyadenosine + formate + L-methionine + 3 H(+). Its pathway is cofactor biosynthesis; thiamine diphosphate biosynthesis. In terms of biological role, catalyzes the synthesis of the hydroxymethylpyrimidine phosphate (HMP-P) moiety of thiamine from aminoimidazole ribotide (AIR) in a radical S-adenosyl-L-methionine (SAM)-dependent reaction. The polypeptide is Phosphomethylpyrimidine synthase (Aliivibrio salmonicida (strain LFI1238) (Vibrio salmonicida (strain LFI1238))).